Reading from the N-terminus, the 932-residue chain is Eukaryotic translation initiation factor 3 subunit A (932 aa).

One can recognise a PCI domain in the interval 309–492 (KPATANFVIL…NSISFSSDLF (184 aa)). A phosphoserine mark is found at Ser-374 and Ser-501. Positions 537–862 (LRKQQAEAAY…DEEISRKLAE (326 aa)) form a coiled coil. Residues 793-865 (AEEEAARAAE…ISRKLAEKAA (73 aa)) are compositionally biased toward basic and acidic residues. The segment at 793-932 (AEEEAARAAE…PPSRRNQQQQ (140 aa)) is disordered. Phosphoserine is present on residues Ser-874, Ser-875, and Ser-877. Positions 877–893 (SPGAWRRGGASAGGVSR) are enriched in low complexity.

It belongs to the eIF-3 subunit A family. As to quaternary structure, component of the eukaryotic translation initiation factor 3 (eIF-3) complex. The eIF-3 complex appears to include tif32/eif3a, SPAC25G10.08/eif3b, tif33/eif3c, SPBC4C3.07/eif3f, tif35/eif3g and sum1/eif3i. This set of common subunits may also associate exclusively with either moe1/eif3d and int6/eif3e, or with SPAC821.05/eif3h and SPAC1751.03/eif3m. The eIF-3 complex may also include SPAC3A12.13c/eif3j.

It is found in the cytoplasm. RNA-binding component of the eukaryotic translation initiation factor 3 (eIF-3) complex, which is involved in protein synthesis of a specialized repertoire of mRNAs and, together with other initiation factors, stimulates binding of mRNA and methionyl-tRNAi to the 40S ribosome. The eIF-3 complex specifically targets and initiates translation of a subset of mRNAs involved in cell proliferation. In Schizosaccharomyces pombe (strain 972 / ATCC 24843) (Fission yeast), this protein is Eukaryotic translation initiation factor 3 subunit A (tif32).